A 186-amino-acid polypeptide reads, in one-letter code: uncharacterized protein (186 aa).

The N-terminal stretch at M1–G18 is a signal peptide. C19 carries the N-palmitoyl cysteine lipid modification. C19 carries S-diacylglycerol cysteine lipidation.

The protein localises to the cell membrane. This is an uncharacterized protein from Escherichia coli (strain K12).